The chain runs to 59 residues: Lantibiotic lacticin 3147 A1 (59 aa).

Positions 1-29 (MNKNEIETQPVTWLEEVSDQNFDEDVFGA) are excised as a propeptide. The segment at residues 30–31 (CS) is a cross-link (lanthionine (Cys-Ser)). A 2,3-didehydrobutyrine mark is found at T32 and T34. Residue S36 is modified to 2,3-didehydroalanine (Ser). The lanthionine (Ser-Cys) cross-link spans 38-48 (SDYWGNNGAWC). 2 consecutive cross-links (beta-methyllanthionine (Thr-Cys)) follow at residues 49–54 (TLTHEC) and 51–58 (THECMAWC).

In terms of processing, maturation of lantibiotics involves the enzymatic conversion of Thr, and Ser into dehydrated AA and the formation of thioether bonds with cysteine. This is followed by membrane translocation and cleavage of the modified precursor. It is not established whether the 2,3-didehydrobutyrines are the E- or Z-isomers. In the NMR model they were assumed to be the Z-isomer.

The protein localises to the secreted. Lanthionine-containing peptide antibiotic (lantibiotic) active on Gram-positive bacteria. The bactericidal activity of lantibiotics is based on depolarization of energized bacterial cytoplasmic membranes, initiated by the formation of aqueous transmembrane pores. When present individually lacticin 3147 A1 exhibits strong activity towards L.lactis strain AM2, weak activity towards L.lactis strain HP and no activity towards L.lactis strain IFPL359, but when combined with lacticin 3147 A2 it displays strong activity towards all three strains. The protein is Lantibiotic lacticin 3147 A1 of Lactococcus lactis subsp. lactis (Streptococcus lactis).